We begin with the raw amino-acid sequence, 260 residues long: Dehydrin ERD10 (260 aa).

Disordered stretches follow at residues 1 to 187, 197 to 216, and 240 to 260; these read MAEE…EEEK, KLPG…TTPL, and KLPG…KVSD. Ala2 is modified (N-acetylalanine). The span at 26 to 44 shows a compositional bias: basic and acidic residues; that stretch reads EIKERGMFDFLKKKEEVKP. Ser61 is subject to Phosphoserine. Composition is skewed to basic and acidic residues over residues 67-102, 130-140, 148-162, 176-187, and 197-207; these read VAKH…DKLH, IVEGDHVKTVE, DRIK…KPGG, SVEDHKPEEEEK, and KLPGHSKKPED. Repeat copies occupy residues 184-204 and 227-247. The 2 X 21 AA repeats, Lys-rich stretch occupies residues 184-247; that stretch reads EEEKKGFMDK…KEKLPGYHAK (64 aa).

It belongs to the plant dehydrin family. In stems, cauline leaves, roots and flowers. Low levels found in maturing seeds. Absent in dry seeds.

In Arabidopsis thaliana (Mouse-ear cress), this protein is Dehydrin ERD10 (ERD10).